Reading from the N-terminus, the 390-residue chain is Protein TAB2 homolog, chloroplastic (390 aa).

The N-terminal 69 residues, methionine 1–glutamate 69, are a transit peptide targeting the chloroplast. Residues arginine 16–asparagine 85 form a disordered region. Over residues serine 61–aspartate 75 the composition is skewed to low complexity.

It localises to the plastid. Its subcellular location is the chloroplast. Its function is as follows. Nuclear genome-encoded factor involved in the biogenesis of photosystem I (PSI). Required for the accumulation of PSI during plant development. Does not seem to be required for the translation of mRNAs of the PSI subunits. The chain is Protein TAB2 homolog, chloroplastic from Zea mays (Maize).